Reading from the N-terminus, the 302-residue chain is Mitochondrial adapter protein MCP1 (302 aa).

The interval 1-35 is disordered; it reads MIKLHEVPPEPVDPASLPHDVNAHSPEGDGNPDKR. At 1-61 the chain is on the cytoplasmic side; sequence MIKLHEVPPE…RFLWNCQKIS (61 aa). The PxP signature appears at 4 to 12; it reads LHEVPPEPV. The chain crosses the membrane as a helical span at residues 62-82; the sequence is VLPMALYFPLHAANTLITPAV. Over 83-100 the chain is Mitochondrial intermembrane; the sequence is SPDSAPDDVLMMVREILP. A helical membrane pass occupies residues 101 to 121; sequence SITTKLLVAGITLHVSAGVLL. The Cytoplasmic portion of the chain corresponds to 122–173; sequence RIVNNWNKPRRNRHRHLKISAEQDLSQDSIGLTGGISGYLFGLYKTFRIPPQ. The helical transmembrane segment at 174–194 threads the bilayer; the sequence is VISGYILVPVLIYHLLIMKWV. Residues 195–219 are Mitochondrial intermembrane-facing; the sequence is PNSISTEVDFASIKQLLSSKNRWWK. A helical membrane pass occupies residues 220–240; that stretch reads WLGGLVPLAILLESGVYHIGS. Residues 241-258 lie on the Cytoplasmic side of the membrane; the sequence is GLCRYFGVRKMTSRKKWS. Residues 259–276 traverse the membrane as a helical segment; the sequence is TAINLLTLVGFVSLIRLM. Topologically, residues 277-302 are mitochondrial intermembrane; that stretch reads KEDSTKLGPNQFESIFKKIRLLLHVN.

In terms of assembly, interacts (via PxP motif) with VPS13 (via SHR-BD domain).

The protein localises to the mitochondrion outer membrane. Its function is as follows. Recruits the lipid transfer protein Vps13 to mitochondria thereby promoting vacuole-mitochondria contacts. Involved in mitochondrial lipid homeostasis. The chain is Mitochondrial adapter protein MCP1 from Saccharomyces cerevisiae (strain ATCC 204508 / S288c) (Baker's yeast).